We begin with the raw amino-acid sequence, 229 residues long: Chloride conductance regulatory protein ICln (229 aa).

The protein belongs to the pICln (TC 1.A.47) family. Homooligomer.

It localises to the cytoplasm. It is found in the nucleus. May participate in cellular volume control by activation of a swelling-induced chloride conductance pathway. The chain is Chloride conductance regulatory protein ICln from Arabidopsis thaliana (Mouse-ear cress).